Consider the following 224-residue polypeptide: Lipoprotein-releasing system ATP-binding protein LolD (224 aa).

The ABC transporter domain maps to 5–224 (LEILDVSKCY…SLSGGMLTEL (220 aa)). Residue 40 to 47 (GSSGSGKS) participates in ATP binding.

This sequence belongs to the ABC transporter superfamily. Lipoprotein translocase (TC 3.A.1.125) family. The complex is composed of two ATP-binding proteins (LolD) and two transmembrane proteins (LolC and LolE).

The protein localises to the cell inner membrane. Part of the ABC transporter complex LolCDE involved in the translocation of mature outer membrane-directed lipoproteins, from the inner membrane to the periplasmic chaperone, LolA. Responsible for the formation of the LolA-lipoprotein complex in an ATP-dependent manner. The polypeptide is Lipoprotein-releasing system ATP-binding protein LolD (Anaplasma marginale (strain St. Maries)).